Consider the following 684-residue polypeptide: Glycine--tRNA ligase beta subunit (684 aa).

Belongs to the class-II aminoacyl-tRNA synthetase family. In terms of assembly, tetramer of two alpha and two beta subunits.

The protein resides in the cytoplasm. It catalyses the reaction tRNA(Gly) + glycine + ATP = glycyl-tRNA(Gly) + AMP + diphosphate. The sequence is that of Glycine--tRNA ligase beta subunit from Pseudomonas aeruginosa (strain LESB58).